The sequence spans 305 residues: Glutaminase (305 aa).

Positions 61, 113, 158, 165, 189, 241, and 259 each coordinate substrate.

Belongs to the glutaminase family. Homotetramer.

It catalyses the reaction L-glutamine + H2O = L-glutamate + NH4(+). The protein is Glutaminase of Alkaliphilus oremlandii (strain OhILAs) (Clostridium oremlandii (strain OhILAs)).